The chain runs to 126 residues: MFAVIKTGGRQYRVVPEDVLEVGKIDGDVGSIIQLGEVLVLGGDTPVLGAPTVAGATVAAEVLDHKRGPKVIAFKKRRRKHSKRKRGYRDEITVLRITEILADGKKPSVGPRAKRTKAAPAAEAAE.

Residues 105-126 (KKPSVGPRAKRTKAAPAAEAAE) are disordered.

In terms of assembly, contacts protein L20. Part of the 50S ribosomal subunit.

Functionally, this protein binds to 23S rRNA in the presence of protein L20. The chain is Large ribosomal subunit protein bL21 from Rhodopseudomonas palustris (strain ATCC BAA-98 / CGA009).